The primary structure comprises 240 residues: 1-(5-phosphoribosyl)-5-[(5-phosphoribosylamino)methylideneamino] imidazole-4-carboxamide isomerase (240 aa).

Asp8 acts as the Proton acceptor in catalysis. The active-site Proton donor is the Asp129.

Belongs to the HisA/HisF family.

It localises to the cytoplasm. The catalysed reaction is 1-(5-phospho-beta-D-ribosyl)-5-[(5-phospho-beta-D-ribosylamino)methylideneamino]imidazole-4-carboxamide = 5-[(5-phospho-1-deoxy-D-ribulos-1-ylimino)methylamino]-1-(5-phospho-beta-D-ribosyl)imidazole-4-carboxamide. The protein operates within amino-acid biosynthesis; L-histidine biosynthesis; L-histidine from 5-phospho-alpha-D-ribose 1-diphosphate: step 4/9. The polypeptide is 1-(5-phosphoribosyl)-5-[(5-phosphoribosylamino)methylideneamino] imidazole-4-carboxamide isomerase (Listeria monocytogenes serotype 4a (strain HCC23)).